Consider the following 141-residue polypeptide: Putative pre-16S rRNA nuclease (141 aa).

The protein belongs to the YqgF nuclease family.

It localises to the cytoplasm. Could be a nuclease involved in processing of the 5'-end of pre-16S rRNA. This is Putative pre-16S rRNA nuclease from Coxiella burnetii (strain CbuK_Q154) (Coxiella burnetii (strain Q154)).